The primary structure comprises 327 residues: 2-keto-3-deoxygluconate permease (327 aa).

10 consecutive transmembrane segments (helical) span residues 10 to 30, 42 to 62, 73 to 93, 95 to 115, 139 to 159, 163 to 183, 199 to 219, 224 to 244, 254 to 274, and 289 to 309; these read IPGGMMLVPLFLGALCHTFSP, GMITGTVPILAVWFFCMGASI, KSGTLVVTKIAVAWVVAAIAS, IIPEHGVEVGFFAGLSTLALV, AGAFVLMSLESGPLMTMIILG, IASFEPHVFVGAVLPFLVGFA, VQTLIPFFAFALGNTIDLTVI, LLGILLGVAVIIVTGIPLIIA, TAGIAASSSAGAAVATPVLIA, and SLVATAVIVTSILVPILTSIW.

The protein belongs to the KdgT transporter family.

It localises to the cell inner membrane. It catalyses the reaction 2-dehydro-3-deoxy-D-gluconate(in) + H(+)(in) = 2-dehydro-3-deoxy-D-gluconate(out) + H(+)(out). Catalyzes the proton-dependent uptake of 2-keto-3-deoxygluconate (KDG) into the cell. The sequence is that of 2-keto-3-deoxygluconate permease from Escherichia coli O7:K1 (strain IAI39 / ExPEC).